A 169-amino-acid chain; its full sequence is Protein FAM106A (169 aa).

This sequence belongs to the FAM106 family.

This is Protein FAM106A (FAM106A) from Homo sapiens (Human).